The primary structure comprises 342 residues: Heat-inducible transcription repressor HrcA (342 aa).

Belongs to the HrcA family.

In terms of biological role, negative regulator of class I heat shock genes (grpE-dnaK-dnaJ and groELS operons). Prevents heat-shock induction of these operons. The sequence is that of Heat-inducible transcription repressor HrcA from Geobacter sulfurreducens (strain ATCC 51573 / DSM 12127 / PCA).